Consider the following 1033-residue polypeptide: TBC domain-containing protein kinase-like protein (1033 aa).

3 disordered regions span residues 1–21 (MMKS…YKFK), 35–55 (YDNN…NTVT), and 81–101 (GSIG…TPKP). Low complexity-rich tracts occupy residues 36 to 52 (DNNN…DDNN) and 81 to 97 (GSIG…NSVS). The region spanning 72–425 (NKLTINQNNG…SETLLDHPYF (354 aa)) is the Protein kinase domain. Residues 78–86 (QNNGSIGGS) and lysine 113 each bind ATP. Positions 535–546 (STNSGLNSPQPY) are enriched in polar residues. The interval 535–560 (STNSGLNSPQPYQHQHHQHQHQHQHP) is disordered. Over residues 548-558 (HQHHQHQHQHQ) the composition is skewed to basic residues. Positions 657-844 (FVPPILRGDI…ILWDSILLCP (188 aa)) constitute a Rab-GAP TBC domain.

It belongs to the protein kinase superfamily. Ser/Thr protein kinase family.

This chain is TBC domain-containing protein kinase-like protein (tbck), found in Dictyostelium discoideum (Social amoeba).